The following is a 410-amino-acid chain: Cysteine desulfurase IscS (410 aa).

Residues 80–81 (AT), Asn160, Gln188, and 208–210 (SGH) contribute to the pyridoxal 5'-phosphate site. Lys211 is subject to N6-(pyridoxal phosphate)lysine. Residue Thr248 participates in pyridoxal 5'-phosphate binding. The active-site Cysteine persulfide intermediate is the Cys334. Cys334 provides a ligand contact to [2Fe-2S] cluster.

This sequence belongs to the class-V pyridoxal-phosphate-dependent aminotransferase family. NifS/IscS subfamily. Homodimer. Forms a heterotetramer with IscU, interacts with other sulfur acceptors. It depends on pyridoxal 5'-phosphate as a cofactor.

The protein resides in the cytoplasm. The catalysed reaction is (sulfur carrier)-H + L-cysteine = (sulfur carrier)-SH + L-alanine. The protein operates within cofactor biosynthesis; iron-sulfur cluster biosynthesis. Functionally, master enzyme that delivers sulfur to a number of partners involved in Fe-S cluster assembly, tRNA modification or cofactor biosynthesis. Catalyzes the removal of elemental sulfur atoms from cysteine to produce alanine. Functions as a sulfur delivery protein for Fe-S cluster synthesis onto IscU, an Fe-S scaffold assembly protein, as well as other S acceptor proteins. This is Cysteine desulfurase IscS from Rickettsia akari (strain Hartford).